A 142-amino-acid polypeptide reads, in one-letter code: Large ribosomal subunit protein uL11 (142 aa).

The protein belongs to the universal ribosomal protein uL11 family. As to quaternary structure, part of the ribosomal stalk of the 50S ribosomal subunit. Interacts with L10 and the large rRNA to form the base of the stalk. L10 forms an elongated spine to which L12 dimers bind in a sequential fashion forming a multimeric L10(L12)X complex. In terms of processing, one or more lysine residues are methylated.

Its function is as follows. Forms part of the ribosomal stalk which helps the ribosome interact with GTP-bound translation factors. The chain is Large ribosomal subunit protein uL11 from Histophilus somni (strain 129Pt) (Haemophilus somnus).